Consider the following 101-residue polypeptide: MMLEHVLILSAYLFSIGIYGLITSRNMVRALMCLELILNAVNMNLIKFSDLFDSRQLKGDIFSIFVIAIAAAEAAIGPAIVSSIHRNRKSTRINQSNLLNK.

Helical transmembrane passes span 2 to 22 (MLEH…YGLI), 27 to 46 (MVRA…MNLI), and 61 to 81 (IFSI…PAIV).

It belongs to the complex I subunit 4L family. In terms of assembly, NDH is composed of at least 16 different subunits, 5 of which are encoded in the nucleus.

It is found in the plastid. Its subcellular location is the chloroplast thylakoid membrane. It catalyses the reaction a plastoquinone + NADH + (n+1) H(+)(in) = a plastoquinol + NAD(+) + n H(+)(out). It carries out the reaction a plastoquinone + NADPH + (n+1) H(+)(in) = a plastoquinol + NADP(+) + n H(+)(out). Functionally, NDH shuttles electrons from NAD(P)H:plastoquinone, via FMN and iron-sulfur (Fe-S) centers, to quinones in the photosynthetic chain and possibly in a chloroplast respiratory chain. The immediate electron acceptor for the enzyme in this species is believed to be plastoquinone. Couples the redox reaction to proton translocation, and thus conserves the redox energy in a proton gradient. The polypeptide is NAD(P)H-quinone oxidoreductase subunit 4L, chloroplastic (Drimys granadensis).